Reading from the N-terminus, the 776-residue chain is Reticulon-1 (776 aa).

Disordered regions lie at residues 1–101 (MAAP…KDGE), 137–168 (SESPEELGTPGPSLPDVPGIESRGLFSSDSGI), 205–245 (VKHQ…PAPV), and 285–580 (LTEI…APPP). Ser-327 carries the phosphoserine modification. Residues 328–341 (PGSITPPSSGTEPS) show a composition bias toward low complexity. Phosphoserine occurs at positions 350, 352, and 487. A compositionally biased stretch (basic and acidic residues) spans 497–511 (AIREETGVRAEERAP). The region spanning 589-776 (AIDLLYWRDI…KIPGAKRHAE (188 aa)) is the Reticulon domain. 2 helical membrane passes run 603-623 (IVFGSFLLLLFSLTQFSVVSV) and 705-725 (FAVLMWLLTYVGALFNGLTLL).

Interacts with NDRG1. Interacts with BACE1. In terms of assembly, interacts with TMEM33. As to quaternary structure, interacts with UGCG; regulates the ceramide glucosyltransferase activity of UGCG. Isoforms RTN1-A and RTN1-B are phosphorylated. In terms of tissue distribution, expressed in neural and neuroendocrine tissues and cell cultures derived therefrom. Expression of isoform RTN1-C is strongly correlated with neuronal differentiation.

The protein resides in the endoplasmic reticulum membrane. The protein localises to the golgi apparatus membrane. In terms of biological role, inhibits amyloid precursor protein processing, probably by blocking BACE1 activity. This is Reticulon-1 (RTN1) from Homo sapiens (Human).